We begin with the raw amino-acid sequence, 1272 residues long: RING finger protein PFE0100w (1272 aa).

A disordered region spans residues 216 to 260; the sequence is INKINDVSNNDPKKDNNEKNTSSNNITHNNYNDISNNNNNNNNIN. Positions 234 to 260 are enriched in low complexity; the sequence is KNTSSNNITHNNYNDISNNNNNNNNIN. The stretch at 608–752 is one CHCR repeat; sequence YIQTINYLET…GYKFIKYYPQ (145 aa). A helical membrane pass occupies residues 771–791; sequence IFIPLFLDNIDFLFMFIVKFL. 2 disordered regions span residues 842 to 862 and 908 to 970; these read NQNHNGIPSDSHNLSDDNNSQ and ENQT…IINK. Low complexity-rich tracts occupy residues 850–861 and 909–956; these read SDSHNLSDDNNS and NQTN…IQTN. Over residues 957 to 967 the composition is skewed to polar residues; it reads KQKGNSTTNKI. Positions 1146 to 1182 form a coiled coil; sequence MNDMNKNINDKCIEIEKDKKELEKIKKKQLKKKYNFY. The segment at 1189–1224 adopts an RING-type; atypical zinc-finger fold; the sequence is CSICKEILSVPMIHFLCKHSYHSYCLKDNNVCILCH.

The protein localises to the membrane. This is RING finger protein PFE0100w from Plasmodium falciparum (isolate 3D7).